The sequence spans 223 residues: Phosphoribosylformylglycinamidine synthase subunit PurQ (223 aa).

A Glutamine amidotransferase type-1 domain is found at 3–223 (SAVILLPGLN…LFAGALGITA (221 aa)). The active-site Nucleophile is the Cys87. Active-site residues include His197 and Glu199.

In terms of assembly, part of the FGAM synthase complex composed of 1 PurL, 1 PurQ and 2 PurS subunits.

It localises to the cytoplasm. It carries out the reaction N(2)-formyl-N(1)-(5-phospho-beta-D-ribosyl)glycinamide + L-glutamine + ATP + H2O = 2-formamido-N(1)-(5-O-phospho-beta-D-ribosyl)acetamidine + L-glutamate + ADP + phosphate + H(+). The catalysed reaction is L-glutamine + H2O = L-glutamate + NH4(+). It participates in purine metabolism; IMP biosynthesis via de novo pathway; 5-amino-1-(5-phospho-D-ribosyl)imidazole from N(2)-formyl-N(1)-(5-phospho-D-ribosyl)glycinamide: step 1/2. In terms of biological role, part of the phosphoribosylformylglycinamidine synthase complex involved in the purines biosynthetic pathway. Catalyzes the ATP-dependent conversion of formylglycinamide ribonucleotide (FGAR) and glutamine to yield formylglycinamidine ribonucleotide (FGAM) and glutamate. The FGAM synthase complex is composed of three subunits. PurQ produces an ammonia molecule by converting glutamine to glutamate. PurL transfers the ammonia molecule to FGAR to form FGAM in an ATP-dependent manner. PurS interacts with PurQ and PurL and is thought to assist in the transfer of the ammonia molecule from PurQ to PurL. The polypeptide is Phosphoribosylformylglycinamidine synthase subunit PurQ (Brucella suis biovar 1 (strain 1330)).